A 233-amino-acid polypeptide reads, in one-letter code: Pre-mRNA-splicing factor syf-2 (233 aa).

A compositionally biased stretch (polar residues) spans 1 to 16 (MSDSEQTSSGTASSGS). Disordered stretches follow at residues 1 to 80 (MSDS…EDKG) and 95 to 119 (VTEKLEQKRKRKKNPDQGFASYEDM). Residues 17 to 80 (KMKDFNQRFR…QDRKEAEDKG (64 aa)) are compositionally biased toward basic and acidic residues. Positions 18–77 (MKDFNQRFRDLHKMRQKARKENHAQVVEEDRRKKLPKNFEAKKERDQWQVKELQDRKEAE) form a coiled coil.

The protein belongs to the SYF2 family. In terms of assembly, may be part of a spliceosome complex.

It is found in the nucleus. In terms of biological role, may be involved in pre-mRNA splicing. This is Pre-mRNA-splicing factor syf-2 from Caenorhabditis briggsae.